The sequence spans 251 residues: 5'-nucleotidase SurE (251 aa).

Residues Asp-8, Asp-9, Ser-39, and Asn-95 each contribute to the a divalent metal cation site.

It belongs to the SurE nucleotidase family. The cofactor is a divalent metal cation.

Its subcellular location is the cytoplasm. The catalysed reaction is a ribonucleoside 5'-phosphate + H2O = a ribonucleoside + phosphate. Nucleotidase that shows phosphatase activity on nucleoside 5'-monophosphates. This Clostridium botulinum (strain Eklund 17B / Type B) protein is 5'-nucleotidase SurE.